The primary structure comprises 1207 residues: Disease resistance protein RPP2B (1207 aa).

In terms of domain architecture, TIR spans 15 to 180; sequence CEFDVFVSFR…EIVKNTFRML (166 aa). Glu-89 is a catalytic residue. The NB-ARC domain maps to 201 to 445; sequence ELEKLLMFDN…FLDIACFFRS (245 aa). LRR repeat units lie at residues 607–630, 653–676, 677–699, 720–743, 744–767, 769–791, 792–815, 840–862, and 863–886; these read PKELVDLSLRYSHIKQLWEDEKNT, AKNLERLDLEGCTSLDLLGSVKQM, NELIYLNLRDCTSLESLPKGFKI, SESIESLHLEGTAIERVVEHIESL, HSLILLNLKNCEKLKYLPNDLYKL, SLQELVLSGCSALESLPPIKEKM, ECLEILLMDGTSIKQTPEMSCLSN, NSFLSDLYLTNCNIDKLPDKFSS, and LRSLRCLCLSRNNIETLPESIEKL.

This sequence belongs to the disease resistance TIR-NB-LRR family.

It catalyses the reaction NAD(+) + H2O = ADP-D-ribose + nicotinamide + H(+). In terms of biological role, disease resistance protein that cooperates with RPP2A to confer resistance to Hyaloperonospora parasitica isolate Cala2. This is Disease resistance protein RPP2B from Arabidopsis thaliana (Mouse-ear cress).